Consider the following 1064-residue polypeptide: Carbamoyl phosphate synthase pyrimidine-specific large chain (1064 aa).

The carboxyphosphate synthetic domain stretch occupies residues 1–401 (MPKRRDIETI…SLLKAVRSLE (401 aa)). R129, R169, G175, G176, R208, I210, G241, I242, H243, Q284, and E298 together coordinate ATP. The ATP-grasp 1 domain occupies 133 to 327 (RALMNELGEP…IAKLAAKIAV (195 aa)). Mg(2+)-binding residues include Q284, E298, and N300. Residues Q284, E298, and N300 each contribute to the Mn(2+) site. Residues 402-546 (IGVHHLELNE…YSTYEEENES (145 aa)) form an oligomerization domain region. A carbamoyl phosphate synthetic domain region spans residues 547–929 (IVTEKPSVIV…ALYKGLVASG (383 aa)). In terms of domain architecture, ATP-grasp 2 spans 671–861 (EQALSELGIP…MANLATKAIL (191 aa)). 10 residues coordinate ATP: R707, R746, I748, E752, G777, V778, H779, S780, Q820, and E832. Mg(2+)-binding residues include Q820, E832, and N834. Residues Q820, E832, and N834 each coordinate Mn(2+). The MGS-like domain occupies 930–1064 (IQIQPHGAVL…TAMTEGLVRS (135 aa)). The interval 930-1064 (IQIQPHGAVL…TAMTEGLVRS (135 aa)) is allosteric domain.

Belongs to the CarB family. Composed of two chains; the small (or glutamine) chain promotes the hydrolysis of glutamine to ammonia, which is used by the large (or ammonia) chain to synthesize carbamoyl phosphate. Tetramer of heterodimers (alpha,beta)4. Requires Mg(2+) as cofactor. Mn(2+) is required as a cofactor.

The enzyme catalyses hydrogencarbonate + L-glutamine + 2 ATP + H2O = carbamoyl phosphate + L-glutamate + 2 ADP + phosphate + 2 H(+). It carries out the reaction hydrogencarbonate + NH4(+) + 2 ATP = carbamoyl phosphate + 2 ADP + phosphate + 2 H(+). The protein operates within amino-acid biosynthesis; L-arginine biosynthesis; carbamoyl phosphate from bicarbonate: step 1/1. It functions in the pathway pyrimidine metabolism; UMP biosynthesis via de novo pathway; (S)-dihydroorotate from bicarbonate: step 1/3. In terms of biological role, small subunit of the glutamine-dependent carbamoyl phosphate synthetase (CPSase). CPSase catalyzes the formation of carbamoyl phosphate from the ammonia moiety of glutamine, carbonate, and phosphate donated by ATP, constituting the first step of the biosynthetic pathway leading to pyrimidine nucleotides. The large subunit (synthetase) binds the substrates ammonia (free or transferred from glutamine from the small subunit), hydrogencarbonate and ATP and carries out an ATP-coupled ligase reaction, activating hydrogencarbonate by forming carboxy phosphate which reacts with ammonia to form carbamoyl phosphate. The protein is Carbamoyl phosphate synthase pyrimidine-specific large chain (pyrAB) of Geobacillus stearothermophilus (Bacillus stearothermophilus).